A 68-amino-acid polypeptide reads, in one-letter code: ATP synthase F(0) complex subunit 8 (68 aa).

A helical membrane pass occupies residues 8 to 24 (TWSITIVSMIITLFIMF). At Lys-54 the chain carries N6-acetyllysine; alternate. The residue at position 54 (Lys-54) is an N6-succinyllysine; alternate. N6-acetyllysine is present on Lys-57.

Belongs to the ATPase protein 8 family. In terms of assembly, component of the ATP synthase complex composed at least of ATP5F1A/subunit alpha, ATP5F1B/subunit beta, ATP5MC1/subunit c (homooctomer), MT-ATP6/subunit a, MT-ATP8/subunit 8, ATP5ME/subunit e, ATP5MF/subunit f, ATP5MG/subunit g, ATP5MK/subunit k, ATP5MJ/subunit j, ATP5F1C/subunit gamma, ATP5F1D/subunit delta, ATP5F1E/subunit epsilon, ATP5PF/subunit F6, ATP5PB/subunit b, ATP5PD/subunit d, ATP5PO/subunit OSCP. ATP synthase complex consists of a soluble F(1) head domain (subunits alpha(3) and beta(3)) - the catalytic core - and a membrane F(0) domain - the membrane proton channel (subunits c, a, 8, e, f, g, k and j). These two domains are linked by a central stalk (subunits gamma, delta, and epsilon) rotating inside the F1 region and a stationary peripheral stalk (subunits F6, b, d, and OSCP). Interacts with PRICKLE3.

It is found in the mitochondrion membrane. Subunit 8, of the mitochondrial membrane ATP synthase complex (F(1)F(0) ATP synthase or Complex V) that produces ATP from ADP in the presence of a proton gradient across the membrane which is generated by electron transport complexes of the respiratory chain. ATP synthase complex consist of a soluble F(1) head domain - the catalytic core - and a membrane F(1) domain - the membrane proton channel. These two domains are linked by a central stalk rotating inside the F(1) region and a stationary peripheral stalk. During catalysis, ATP synthesis in the catalytic domain of F(1) is coupled via a rotary mechanism of the central stalk subunits to proton translocation. In vivo, can only synthesize ATP although its ATP hydrolase activity can be activated artificially in vitro. Part of the complex F(0) domain. The chain is ATP synthase F(0) complex subunit 8 from Ceratotherium simum (White rhinoceros).